Reading from the N-terminus, the 360-residue chain is S-adenosylmethionine:tRNA ribosyltransferase-isomerase (360 aa).

Belongs to the QueA family. In terms of assembly, monomer.

Its subcellular location is the cytoplasm. It catalyses the reaction 7-aminomethyl-7-carbaguanosine(34) in tRNA + S-adenosyl-L-methionine = epoxyqueuosine(34) in tRNA + adenine + L-methionine + 2 H(+). Its pathway is tRNA modification; tRNA-queuosine biosynthesis. Transfers and isomerizes the ribose moiety from AdoMet to the 7-aminomethyl group of 7-deazaguanine (preQ1-tRNA) to give epoxyqueuosine (oQ-tRNA). This Rhizobium meliloti (strain 1021) (Ensifer meliloti) protein is S-adenosylmethionine:tRNA ribosyltransferase-isomerase.